A 102-amino-acid chain; its full sequence is Large ribosomal subunit protein bL21 (102 aa).

Belongs to the bacterial ribosomal protein bL21 family. As to quaternary structure, part of the 50S ribosomal subunit. Contacts protein L20.

This protein binds to 23S rRNA in the presence of protein L20. The sequence is that of Large ribosomal subunit protein bL21 from Stenotrophomonas maltophilia (strain K279a).